The sequence spans 705 residues: Beta-xylosidase (705 aa).

The protein belongs to the glycosyl hydrolase 52 family.

It catalyses the reaction Hydrolysis of (1-&gt;4)-beta-D-xylans, to remove successive D-xylose residues from the non-reducing termini.. The protein operates within glycan degradation; xylan degradation. This chain is Beta-xylosidase (xylA), found in Geobacillus stearothermophilus (Bacillus stearothermophilus).